Consider the following 172-residue polypeptide: MSRQHAYSREELLATARGELFSHSNARLPNDPMLMFDRITEIYADGGSHGKGIVNAELDIRPDLWFFGCHFLGDPVMPGCLGLDAMWQLTGFFLTWSGATPGYGRALGCGEVKFTGQVLPNAKLVRYEIEMTKIINRTLVIGQANARMLVDNREIYFAKDLRVGMFNSTESF.

Residue histidine 70 is part of the active site.

The protein belongs to the thioester dehydratase family. FabA subfamily. In terms of assembly, homodimer.

The protein resides in the cytoplasm. It catalyses the reaction a (3R)-hydroxyacyl-[ACP] = a (2E)-enoyl-[ACP] + H2O. The catalysed reaction is (3R)-hydroxydecanoyl-[ACP] = (2E)-decenoyl-[ACP] + H2O. It carries out the reaction (2E)-decenoyl-[ACP] = (3Z)-decenoyl-[ACP]. Its pathway is lipid metabolism; fatty acid biosynthesis. Necessary for the introduction of cis unsaturation into fatty acids. Catalyzes the dehydration of (3R)-3-hydroxydecanoyl-ACP to E-(2)-decenoyl-ACP and then its isomerization to Z-(3)-decenoyl-ACP. Can catalyze the dehydratase reaction for beta-hydroxyacyl-ACPs with saturated chain lengths up to 16:0, being most active on intermediate chain length. This Xylella fastidiosa (strain 9a5c) protein is 3-hydroxydecanoyl-[acyl-carrier-protein] dehydratase (fabA).